We begin with the raw amino-acid sequence, 156 residues long: MQIIEGKLHLQGNEKVAILTSRFNHIITDRLQEGAIDCFKRHGGDENLLDIVLVPGAYELPFILERLLGSEKYDGVCVLGAIIRGGTPHFDYVSAEATKGIANAMLKYSMPVSFGVLTTDNVEQAIERAGSKAGNKGFEAMSTLIELLSLCQTLKG.

5-amino-6-(D-ribitylamino)uracil-binding positions include Phe23, 57–59 (AYE), and 81–83 (AII). Residue 86–87 (GT) participates in (2S)-2-hydroxy-3-oxobutyl phosphate binding. His89 acts as the Proton donor in catalysis. Phe114 contributes to the 5-amino-6-(D-ribitylamino)uracil binding site. Arg128 provides a ligand contact to (2S)-2-hydroxy-3-oxobutyl phosphate.

Belongs to the DMRL synthase family.

It carries out the reaction (2S)-2-hydroxy-3-oxobutyl phosphate + 5-amino-6-(D-ribitylamino)uracil = 6,7-dimethyl-8-(1-D-ribityl)lumazine + phosphate + 2 H2O + H(+). The protein operates within cofactor biosynthesis; riboflavin biosynthesis; riboflavin from 2-hydroxy-3-oxobutyl phosphate and 5-amino-6-(D-ribitylamino)uracil: step 1/2. In terms of biological role, catalyzes the formation of 6,7-dimethyl-8-ribityllumazine by condensation of 5-amino-6-(D-ribitylamino)uracil with 3,4-dihydroxy-2-butanone 4-phosphate. This is the penultimate step in the biosynthesis of riboflavin. The sequence is that of 6,7-dimethyl-8-ribityllumazine synthase from Helicobacter pylori (strain Shi470).